The following is a 145-amino-acid chain: D-aminoacyl-tRNA deacylase (145 aa).

A Gly-cisPro motif, important for rejection of L-amino acids motif is present at residues 137–138 (GP).

The protein belongs to the DTD family. In terms of assembly, homodimer.

Its subcellular location is the cytoplasm. It carries out the reaction glycyl-tRNA(Ala) + H2O = tRNA(Ala) + glycine + H(+). The catalysed reaction is a D-aminoacyl-tRNA + H2O = a tRNA + a D-alpha-amino acid + H(+). In terms of biological role, an aminoacyl-tRNA editing enzyme that deacylates mischarged D-aminoacyl-tRNAs. Also deacylates mischarged glycyl-tRNA(Ala), protecting cells against glycine mischarging by AlaRS. Acts via tRNA-based rather than protein-based catalysis; rejects L-amino acids rather than detecting D-amino acids in the active site. By recycling D-aminoacyl-tRNA to D-amino acids and free tRNA molecules, this enzyme counteracts the toxicity associated with the formation of D-aminoacyl-tRNA entities in vivo and helps enforce protein L-homochirality. This Francisella tularensis subsp. novicida (strain U112) protein is D-aminoacyl-tRNA deacylase.